A 181-amino-acid chain; its full sequence is Oligoribonuclease (181 aa).

The Exonuclease domain maps to 8-171 (LIWVDLEMTG…VDIQESIAEL (164 aa)). Tyr129 is an active-site residue.

This sequence belongs to the oligoribonuclease family.

The protein localises to the cytoplasm. Its function is as follows. 3'-to-5' exoribonuclease specific for small oligoribonucleotides. This Shewanella loihica (strain ATCC BAA-1088 / PV-4) protein is Oligoribonuclease.